The chain runs to 305 residues: UDP-3-O-acyl-N-acetylglucosamine deacetylase (305 aa).

Zn(2+) is bound by residues H78, H237, and D241. The active-site Proton donor is the H264.

This sequence belongs to the LpxC family. Zn(2+) serves as cofactor.

It carries out the reaction a UDP-3-O-[(3R)-3-hydroxyacyl]-N-acetyl-alpha-D-glucosamine + H2O = a UDP-3-O-[(3R)-3-hydroxyacyl]-alpha-D-glucosamine + acetate. Its pathway is glycolipid biosynthesis; lipid IV(A) biosynthesis; lipid IV(A) from (3R)-3-hydroxytetradecanoyl-[acyl-carrier-protein] and UDP-N-acetyl-alpha-D-glucosamine: step 2/6. Catalyzes the hydrolysis of UDP-3-O-myristoyl-N-acetylglucosamine to form UDP-3-O-myristoylglucosamine and acetate, the committed step in lipid A biosynthesis. The protein is UDP-3-O-acyl-N-acetylglucosamine deacetylase of Burkholderia pseudomallei (strain 668).